A 1038-amino-acid polypeptide reads, in one-letter code: Elongation factor 3 (1038 aa).

6 HEAT repeats span residues 93–131 (EAYLLPLLSVFLDLLGDKKPTVRPVAQEAALTIISSANK), 133–170 (STIRILPILFDGLDRSKKWQTKKGALDLIAELSKVAPY), 174–211 (RCLPDIIPQVTDCMWDTRKEVKVAARDTMTKVCNVVGN), 213–249 (DIEPFIPALVSCLANPTEVPECTHKLASTTFVKTVEA), 255–287 (MEPLLKRALAEGKTAVKRQAAVIIDNMCKLMDD), and 292–331 (QLFIPKLLPGLKKVIETQADPECREVATRAHETLFVAGGS). Glu-406 serves as a coordination point for ADP. ABC transporter domains are found at residues 426 to 654 (IFIE…YYEL) and 680 to 995 (IRLT…EEVT). Asn-716, Glu-924, Asn-927, and His-953 together coordinate ADP. The interval 1012–1038 (RKEKKAKDKARKEAEARGEYYSDSDEE) is disordered. The span at 1021–1031 (ARKEAEARGEY) shows a compositional bias: basic and acidic residues.

Belongs to the ABC transporter superfamily. ABCF family. EF3 subfamily. Monomer.

Its subcellular location is the cytoplasm. The enzyme catalyses ATP + H2O = ADP + phosphate + H(+). The protein operates within protein biosynthesis; polypeptide chain elongation. Functionally, ribosome-dependent ATPase that functions in cytoplasmic translation elongation. Required for the ATP-dependent release of deacylated tRNA from the ribosomal E-site during protein biosynthesis. Stimulates the eEF1A-dependent binding of aminoacyl-tRNA to the ribosomal A-site, which has reduced affinity for tRNA as long as the E-site is occupied. Assists translation termination by stimulating the release of nascent protein from the ribosome by release factors. The protein is Elongation factor 3 of Phytophthora infestans (strain T30-4) (Potato late blight agent).